Consider the following 239-residue polypeptide: tRNA (guanine-N(7)-)-methyltransferase (239 aa).

Residues Glu69, Glu94, Asp121, and Asp144 each coordinate S-adenosyl-L-methionine. Asp144 is an active-site residue. Lys148 serves as a coordination point for substrate. An interaction with RNA region spans residues Arg150–Arg155. Residues Asp180 and Thr217–Glu220 contribute to the substrate site.

It belongs to the class I-like SAM-binding methyltransferase superfamily. TrmB family. As to quaternary structure, monomer.

It catalyses the reaction guanosine(46) in tRNA + S-adenosyl-L-methionine = N(7)-methylguanosine(46) in tRNA + S-adenosyl-L-homocysteine. The protein operates within tRNA modification; N(7)-methylguanine-tRNA biosynthesis. Catalyzes the formation of N(7)-methylguanine at position 46 (m7G46) in tRNA. The sequence is that of tRNA (guanine-N(7)-)-methyltransferase from Shigella dysenteriae serotype 1 (strain Sd197).